We begin with the raw amino-acid sequence, 231 residues long: Killer cell lectin-like receptor subfamily F member 1 (231 aa).

At 1–38 (MQDEERYMTLNVQSKKRSSAQTSQLTFKDYSVTLHWYK) the chain is on the cytoplasmic side. Tyrosine 7 carries the post-translational modification Phosphotyrosine. A helical; Signal-anchor for type II membrane protein membrane pass occupies residues 39-59 (ILLGISGTVNGILTLTLISLI). Residues 60–231 (LLVSQGVLLK…SSVFKWICQY (172 aa)) are Extracellular-facing. N-linked (GlcNAc...) asparagine glycans are attached at residues asparagine 77, asparagine 91, asparagine 96, and asparagine 176. The 110-residue stretch at 121–230 (YQGKCYWFSN…CSSVFKWICQ (110 aa)) folds into the C-type lectin domain. 2 cysteine pairs are disulfide-bonded: cysteine 142/cysteine 229 and cysteine 208/cysteine 221.

As to quaternary structure, homodimer. Interacts with CLEC2B. In terms of processing, phosphorylated on Tyr-7; this phosphorylation is required for NKp80/KLRF1-mediated cytotoxicity. As to expression, strongly expressed in peripheral blood leukocytes and spleen, with weaker expression in lymph node and adult liver, and no expression detected in bone marrow, thymus, and fetal liver. Not expressed in brain, heart, placenta, lung, kidney, skeletal muscle, and pancreas. Within peripheral blood leukocyte and immunocyte cell lines, expression was predominant in NK cells but was also detected in monocytes.

The protein resides in the membrane. Functionally, functions as an activating receptor involved in immunosurveillance upon binding to various ligands displayed at the surface of myeloid cells. Upon interaction with CLEC2B ligand, stimulates NK-cell cytotoxicity and cytokine production leading to the cytolysis of malignant CLEC2B-expressing myeloid cells. Actviation of the common cytotoxicity pathway involves SRC and SYK kinases. In Homo sapiens (Human), this protein is Killer cell lectin-like receptor subfamily F member 1 (KLRF1).